A 510-amino-acid chain; its full sequence is tRNA(Ile)-lysidine synthase (510 aa).

Ser-32 to Ser-37 contributes to the ATP binding site.

Belongs to the tRNA(Ile)-lysidine synthase family.

Its subcellular location is the cytoplasm. The catalysed reaction is cytidine(34) in tRNA(Ile2) + L-lysine + ATP = lysidine(34) in tRNA(Ile2) + AMP + diphosphate + H(+). In terms of biological role, ligates lysine onto the cytidine present at position 34 of the AUA codon-specific tRNA(Ile) that contains the anticodon CAU, in an ATP-dependent manner. Cytidine is converted to lysidine, thus changing the amino acid specificity of the tRNA from methionine to isoleucine. The chain is tRNA(Ile)-lysidine synthase from Blochmanniella pennsylvanica (strain BPEN).